Here is a 110-residue protein sequence, read N- to C-terminus: Large ribosomal subunit protein uL22 (110 aa).

This sequence belongs to the universal ribosomal protein uL22 family. As to quaternary structure, part of the 50S ribosomal subunit.

Its function is as follows. This protein binds specifically to 23S rRNA; its binding is stimulated by other ribosomal proteins, e.g. L4, L17, and L20. It is important during the early stages of 50S assembly. It makes multiple contacts with different domains of the 23S rRNA in the assembled 50S subunit and ribosome. The globular domain of the protein is located near the polypeptide exit tunnel on the outside of the subunit, while an extended beta-hairpin is found that lines the wall of the exit tunnel in the center of the 70S ribosome. The sequence is that of Large ribosomal subunit protein uL22 from Klebsiella pneumoniae (strain 342).